Consider the following 193-residue polypeptide: ATP-dependent protease subunit HslV (193 aa).

T12 is an active-site residue. The Na(+) site is built by A167, C170, and T173.

It belongs to the peptidase T1B family. HslV subfamily. In terms of assembly, a double ring-shaped homohexamer of HslV is capped on each side by a ring-shaped HslU homohexamer. The assembly of the HslU/HslV complex is dependent on binding of ATP.

It localises to the cytoplasm. It catalyses the reaction ATP-dependent cleavage of peptide bonds with broad specificity.. Allosterically activated by HslU binding. Functionally, protease subunit of a proteasome-like degradation complex believed to be a general protein degrading machinery. This Bartonella quintana (strain Toulouse) (Rochalimaea quintana) protein is ATP-dependent protease subunit HslV.